A 164-amino-acid polypeptide reads, in one-letter code: Cyclic pyranopterin monophosphate synthase (164 aa).

Substrate-binding positions include 75-77 (MCH) and 116-117 (ME). Residue Asp-131 is part of the active site.

Belongs to the MoaC family. In terms of assembly, homohexamer; trimer of dimers.

It carries out the reaction (8S)-3',8-cyclo-7,8-dihydroguanosine 5'-triphosphate = cyclic pyranopterin phosphate + diphosphate. The protein operates within cofactor biosynthesis; molybdopterin biosynthesis. In terms of biological role, catalyzes the conversion of (8S)-3',8-cyclo-7,8-dihydroguanosine 5'-triphosphate to cyclic pyranopterin monophosphate (cPMP). In Staphylococcus aureus (strain MRSA252), this protein is Cyclic pyranopterin monophosphate synthase.